The following is a 481-amino-acid chain: Histidine--tRNA ligase, cytoplasmic (481 aa).

A disordered region spans residues 1-48 (MSEPVVDNVTNKVEKMEVKEKTSAPPKEKKEKKSNKVQLKTPKGTQDY). The span at 12-31 (KVEKMEVKEKTSAPPKEKKE) shows a compositional bias: basic and acidic residues.

This sequence belongs to the class-II aminoacyl-tRNA synthetase family.

The protein localises to the cytoplasm. It catalyses the reaction tRNA(His) + L-histidine + ATP = L-histidyl-tRNA(His) + AMP + diphosphate + H(+). The polypeptide is Histidine--tRNA ligase, cytoplasmic (hisS) (Dictyostelium discoideum (Social amoeba)).